We begin with the raw amino-acid sequence, 127 residues long: D-ribose pyranase (127 aa).

The active-site Proton donor is His-20. Residues Asp-28, His-94, and Tyr-116–Asn-118 contribute to the substrate site.

This sequence belongs to the RbsD / FucU family. RbsD subfamily. As to quaternary structure, homodecamer.

The protein localises to the cytoplasm. It catalyses the reaction beta-D-ribopyranose = beta-D-ribofuranose. Its pathway is carbohydrate metabolism; D-ribose degradation; D-ribose 5-phosphate from beta-D-ribopyranose: step 1/2. Catalyzes the interconversion of beta-pyran and beta-furan forms of D-ribose. The chain is D-ribose pyranase from Cutibacterium acnes (strain DSM 16379 / KPA171202) (Propionibacterium acnes).